The sequence spans 318 residues: Malate dehydrogenase (318 aa).

NAD(+) is bound by residues 10–15 (GGGQIG) and aspartate 34. 2 residues coordinate substrate: arginine 83 and arginine 89. Residues asparagine 96 and 119–121 (LSN) each bind NAD(+). Substrate contacts are provided by asparagine 121 and arginine 152. The active-site Proton acceptor is the histidine 176.

Belongs to the LDH/MDH superfamily. MDH type 3 family.

It carries out the reaction (S)-malate + NAD(+) = oxaloacetate + NADH + H(+). In terms of biological role, catalyzes the reversible oxidation of malate to oxaloacetate. The sequence is that of Malate dehydrogenase from Syntrophotalea carbinolica (strain DSM 2380 / NBRC 103641 / GraBd1) (Pelobacter carbinolicus).